Consider the following 154-residue polypeptide: Xanthine-guanine phosphoribosyltransferase (154 aa).

5-phospho-alpha-D-ribose 1-diphosphate is bound by residues arginine 37–glycine 38, arginine 69, and glutamate 88–threonine 96. A GMP-binding site is contributed by arginine 69. Aspartate 89 serves as a coordination point for Mg(2+). 2 residues coordinate guanine: aspartate 92 and isoleucine 135. Residues aspartate 92 and isoleucine 135 each contribute to the xanthine site. GMP contacts are provided by residues aspartate 92–threonine 96 and tryptophan 134–isoleucine 135.

The protein belongs to the purine/pyrimidine phosphoribosyltransferase family. XGPT subfamily. Homotetramer. Requires Mg(2+) as cofactor.

Its subcellular location is the cell inner membrane. The enzyme catalyses GMP + diphosphate = guanine + 5-phospho-alpha-D-ribose 1-diphosphate. It carries out the reaction XMP + diphosphate = xanthine + 5-phospho-alpha-D-ribose 1-diphosphate. It catalyses the reaction IMP + diphosphate = hypoxanthine + 5-phospho-alpha-D-ribose 1-diphosphate. The protein operates within purine metabolism; GMP biosynthesis via salvage pathway; GMP from guanine: step 1/1. It functions in the pathway purine metabolism; XMP biosynthesis via salvage pathway; XMP from xanthine: step 1/1. Purine salvage pathway enzyme that catalyzes the transfer of the ribosyl-5-phosphate group from 5-phospho-alpha-D-ribose 1-diphosphate (PRPP) to the N9 position of the 6-oxopurines guanine and xanthine to form the corresponding ribonucleotides GMP (guanosine 5'-monophosphate) and XMP (xanthosine 5'-monophosphate), with the release of PPi. To a lesser extent, also acts on hypoxanthine. This is Xanthine-guanine phosphoribosyltransferase from Vibrio parahaemolyticus serotype O3:K6 (strain RIMD 2210633).